Reading from the N-terminus, the 483-residue chain is 6-phosphogluconate dehydrogenase, decarboxylating (483 aa).

Residues 10–15 and 33–35 each bind NADP(+); these read GLAVMG and NRT. Lys38 bears the N6-acetyllysine mark. A Phosphoserine modification is found at Ser57. An N6-acetyllysine modification is found at Lys59. NADP(+)-binding positions include 75–77 and Asn103; that span reads VKA. Residues Asn103 and 129–131 contribute to the substrate site; that span reads SGG. Phosphoserine is present on Ser129. Lys184 acts as the Proton acceptor in catalysis. 187–188 contacts substrate; it reads HN. Glu191 (proton donor) is an active-site residue. Residues Tyr192, Lys261, and Arg288 each contribute to the substrate site. Residue Lys309 is modified to N6-acetyllysine. Positions 447 and 453 each coordinate substrate. 478 to 481 is a binding site for NADP(+); the sequence is SSSY.

This sequence belongs to the 6-phosphogluconate dehydrogenase family. In terms of assembly, homodimer.

It localises to the cytoplasm. The enzyme catalyses 6-phospho-D-gluconate + NADP(+) = D-ribulose 5-phosphate + CO2 + NADPH. The protein operates within carbohydrate degradation; pentose phosphate pathway; D-ribulose 5-phosphate from D-glucose 6-phosphate (oxidative stage): step 3/3. Functionally, catalyzes the oxidative decarboxylation of 6-phosphogluconate to ribulose 5-phosphate and CO(2), with concomitant reduction of NADP to NADPH. The chain is 6-phosphogluconate dehydrogenase, decarboxylating (PGD) from Homo sapiens (Human).